Here is a 542-residue protein sequence, read N- to C-terminus: CTP synthase (542 aa).

An amidoligase domain region spans residues 1 to 265; the sequence is MARYVFITGG…DSEVLSAFGI (265 aa). Ser13 contributes to the CTP binding site. A UTP-binding site is contributed by Ser13. 14 to 19 is a binding site for ATP; that stretch reads SLGKGI. An L-glutamine-binding site is contributed by Tyr54. Residue Asp71 coordinates ATP. Positions 71 and 139 each coordinate Mg(2+). CTP is bound by residues 146 to 148, 186 to 191, and Lys222; these read DIE and KTKPTQ. Residues 186–191 and Lys222 contribute to the UTP site; that span reads KTKPTQ. Residues 291–541 enclose the Glutamine amidotransferase type-1 domain; that stretch reads TIAVVGKYTG…IEAAIEQSRL (251 aa). An L-glutamine-binding site is contributed by Gly353. The Nucleophile; for glutamine hydrolysis role is filled by Cys380. Residues 381 to 384, Glu404, and Arg469 contribute to the L-glutamine site; that span reads FGMQ. Catalysis depends on residues His514 and Glu516.

Belongs to the CTP synthase family. Homotetramer.

It catalyses the reaction UTP + L-glutamine + ATP + H2O = CTP + L-glutamate + ADP + phosphate + 2 H(+). The enzyme catalyses L-glutamine + H2O = L-glutamate + NH4(+). It carries out the reaction UTP + NH4(+) + ATP = CTP + ADP + phosphate + 2 H(+). The protein operates within pyrimidine metabolism; CTP biosynthesis via de novo pathway; CTP from UDP: step 2/2. Allosterically activated by GTP, when glutamine is the substrate; GTP has no effect on the reaction when ammonia is the substrate. The allosteric effector GTP functions by stabilizing the protein conformation that binds the tetrahedral intermediate(s) formed during glutamine hydrolysis. Inhibited by the product CTP, via allosteric rather than competitive inhibition. Catalyzes the ATP-dependent amination of UTP to CTP with either L-glutamine or ammonia as the source of nitrogen. Regulates intracellular CTP levels through interactions with the four ribonucleotide triphosphates. This Brucella abortus (strain 2308) protein is CTP synthase.